Consider the following 371-residue polypeptide: Aspartate-semialdehyde dehydrogenase (371 aa).

NADP(+)-binding positions include 9 to 12, 37 to 38, and glutamine 73; these read RGMV and TS. Phosphate is bound at residue arginine 102. Catalysis depends on cysteine 135, which acts as the Acyl-thioester intermediate. Residue glutamine 162 participates in substrate binding. NADP(+) contacts are provided by residues 165-166 and proline 193; that span reads SG. A substrate-binding site is contributed by glutamate 241. Residue lysine 244 coordinates phosphate. Residue arginine 268 participates in substrate binding. The Proton acceptor role is filled by histidine 275. Glutamine 351 contacts NADP(+).

The protein belongs to the aspartate-semialdehyde dehydrogenase family. Homodimer.

It carries out the reaction L-aspartate 4-semialdehyde + phosphate + NADP(+) = 4-phospho-L-aspartate + NADPH + H(+). The protein operates within amino-acid biosynthesis; L-lysine biosynthesis via DAP pathway; (S)-tetrahydrodipicolinate from L-aspartate: step 2/4. Its pathway is amino-acid biosynthesis; L-methionine biosynthesis via de novo pathway; L-homoserine from L-aspartate: step 2/3. It participates in amino-acid biosynthesis; L-threonine biosynthesis; L-threonine from L-aspartate: step 2/5. Functionally, catalyzes the NADPH-dependent formation of L-aspartate-semialdehyde (L-ASA) by the reductive dephosphorylation of L-aspartyl-4-phosphate. The sequence is that of Aspartate-semialdehyde dehydrogenase from Neisseria meningitidis serogroup B (strain ATCC BAA-335 / MC58).